A 271-amino-acid polypeptide reads, in one-letter code: Neurexophilin-1 (271 aa).

Positions 1–21 (MQAACWYVLLLLQPTVYLVTC) are cleaved as a signal peptide. The segment at 22–97 (ANLTNGGKSE…WDWLRNSTDL (76 aa)) is II. Residues Asn23, Asn68, Asn93, Asn146, Asn156, and Asn162 are each glycosylated (N-linked (GlcNAc...) asparagine). The III stretch occupies residues 98–176 (QEPRPRAKRR…LVPPTKIVEF (79 aa)). The IV (linker domain) stretch occupies residues 177-185 (DLAQQTVID). Residues 186–271 (AKDSKSFNCR…HSDTPYFPSG (86 aa)) form a v (Cys-rich) region.

The protein belongs to the neurexophilin family. May be proteolytically processed at the boundary between the N-terminal non-conserved and the central conserved domain in neuron-like cells. Brain, only in a scattered subpopulation of neurons that probably represent inhibitory interneurons.

The protein resides in the secreted. In terms of biological role, may be signaling molecules that resemble neuropeptides. Ligand for alpha-neurexins. This is Neurexophilin-1 (Nxph1) from Mus musculus (Mouse).